We begin with the raw amino-acid sequence, 291 residues long: Protease HtpX homolog (291 aa).

Helical transmembrane passes span 4–24 (VVLF…SARI) and 38–58 (MGML…ISLL). Residue His144 participates in Zn(2+) binding. Glu145 is an active-site residue. His148 is a Zn(2+) binding site. 2 consecutive transmembrane segments (helical) span residues 152 to 172 (GDMV…IFLS) and 199 to 219 (ISSI…VMCF). Glu224 lines the Zn(2+) pocket.

This sequence belongs to the peptidase M48B family. Requires Zn(2+) as cofactor.

The protein resides in the cell inner membrane. This Chlorobium limicola (strain DSM 245 / NBRC 103803 / 6330) protein is Protease HtpX homolog.